The following is a 371-amino-acid chain: MPDYLQQYFTLDNIIQIGISLAILLVFLILRKLFTRYFFNLLFNLTNRPKTEIFKQVVLAFDKPARWFFVALGLFLAIRYSPFLDEQMPVISKIYRSLIVALLCWGLCNLTATSSFIFHKVNQRFELDMDDILAPFLSKLLRFVIIALSVSVIAQEFNYDVNGFVAGLGLGGLAFALAAKDTISNFFGGIIIITEKPFTIGDWVETSTVTGSVEDITFRSTRFRTAQGALVTVPNSTLSMEAITNWTRMTKRQITFSIHVSYATPIENLERSIHSLRTMLLEHEGVDNEIIMVNFDTFADSYYNLFFNFYTKTTVWAENLNIREDINYKIIEILGAEGVQFAYPGQMVVVKQKHESDQFQVNLNKEEKERA.

A run of 7 helical transmembrane segments spans residues 9–29 (FTLD…VFLI), 58–78 (VLAF…FLAI), 98–118 (LIVA…SFIF), 133–153 (LAPF…VSVI), 159–179 (YDVN…ALAA), 183–203 (ISNF…IGDW), and 330–350 (IIEI…MVVV).

It belongs to the MscS (TC 1.A.23) family.

The protein localises to the cell membrane. Functionally, may play a role in resistance to osmotic downshock. This is an uncharacterized protein from Bacillus subtilis (strain 168).